Consider the following 216-residue polypeptide: 1-Cys peroxiredoxin PER1 (216 aa).

In terms of domain architecture, Thioredoxin spans isoleucine 4–methionine 159. The active-site Cysteine sulfenic acid (-SOH) intermediate is cysteine 46. Residues lysine 191–glutamate 214 carry the Bipartite nuclear localization signal motif.

The protein belongs to the peroxiredoxin family. Prx6 subfamily. Predominantly expressed in seed. Expressed in endosperm, embryo and aleurone cells. Also detected in young seedlings, abscission zones, stem branching points.

The protein localises to the nucleus. The protein resides in the cytoplasm. The enzyme catalyses a hydroperoxide + [thioredoxin]-dithiol = an alcohol + [thioredoxin]-disulfide + H2O. In terms of biological role, thiol-specific peroxidase that catalyzes the reduction of hydrogen peroxide and organic hydroperoxides to water and alcohols, respectively. Seems to contribute to the inhibition of germination during stress. This chain is 1-Cys peroxiredoxin PER1 (PER1), found in Arabidopsis thaliana (Mouse-ear cress).